Consider the following 685-residue polypeptide: Multisite-specific tRNA:(cytosine-C(5))-methyltransferase trm4b (685 aa).

S-adenosyl-L-methionine contacts are provided by residues 167–173 (CAAPGSK), aspartate 208, aspartate 235, and aspartate 270. Cysteine 323 (nucleophile) is an active-site residue.

Belongs to the class I-like SAM-binding methyltransferase superfamily. RsmB/NOP family. TRM4 subfamily.

Its subcellular location is the nucleus. It carries out the reaction cytidine(49) in tRNA precursor + S-adenosyl-L-methionine = 5-methylcytidine(49) in tRNA precursor + S-adenosyl-L-homocysteine + H(+). It catalyses the reaction cytidine(50) in tRNA + S-adenosyl-L-methionine = 5-methylcytidine(50) in tRNA + S-adenosyl-L-homocysteine + H(+). The catalysed reaction is cytidine(60) in tRNA(Asp) + S-adenosyl-L-methionine = 5-methylcytidine(60) in tRNA(Asp) + S-adenosyl-L-homocysteine + H(+). The enzyme catalyses cytidine(61) in tRNA(Asp) + S-adenosyl-L-methionine = 5-methylcytidine(61) in tRNA(Asp) + S-adenosyl-L-homocysteine + H(+). It carries out the reaction cytidine(62) in tRNA(Asp) + S-adenosyl-L-methionine = 5-methylcytidine(62) in tRNA(Asp) + S-adenosyl-L-homocysteine + H(+). Functionally, tRNA cytosine C(5)-methyltransferase that methylates cytosine to 5-methylcytosine (m5C) in tRNAs at position 49 and 50. Trm4a and trm4b methylate different sets of tRNAs. Also methylates cytosine to m5C at positions (60, 61 and 62) in tRNA(Asp). This Schizosaccharomyces pombe (strain 972 / ATCC 24843) (Fission yeast) protein is Multisite-specific tRNA:(cytosine-C(5))-methyltransferase trm4b.